We begin with the raw amino-acid sequence, 232 residues long: Ribonuclease 3 (232 aa).

The 130-residue stretch at 5 to 134 folds into the RNase III domain; sequence QTVLKNHFAI…FLGALLLDKD (130 aa). Residue Glu-47 participates in Mg(2+) binding. Asp-51 is an active-site residue. 2 residues coordinate Mg(2+): Asp-120 and Glu-123. Residue Glu-123 is part of the active site. In terms of domain architecture, DRBM spans 160 to 229; that stretch reads DYKTHLQELL…AKNAVEKGLD (70 aa).

Belongs to the ribonuclease III family. Homodimer. Requires Mg(2+) as cofactor.

It localises to the cytoplasm. It carries out the reaction Endonucleolytic cleavage to 5'-phosphomonoester.. Its function is as follows. Digests double-stranded RNA. Involved in the processing of primary rRNA transcript to yield the immediate precursors to the large and small rRNAs (23S and 16S). Processes some mRNAs, and tRNAs when they are encoded in the rRNA operon. Processes pre-crRNA and tracrRNA of type II CRISPR loci if present in the organism. This is Ribonuclease 3 from Streptococcus pneumoniae serotype 4 (strain ATCC BAA-334 / TIGR4).